The following is a 257-amino-acid chain: Pimeloyl-[acyl-carrier protein] methyl ester esterase (257 aa).

An AB hydrolase-1 domain is found at H15–H241. Substrate-binding positions include W22, S82–L83, and F143–Q147. The active-site Nucleophile is S82. Residues D207 and H235 contribute to the active site. A substrate-binding site is contributed by H235.

The protein belongs to the AB hydrolase superfamily. Carboxylesterase BioH family. As to quaternary structure, monomer.

It is found in the cytoplasm. The catalysed reaction is 6-carboxyhexanoyl-[ACP] methyl ester + H2O = 6-carboxyhexanoyl-[ACP] + methanol + H(+). The protein operates within cofactor biosynthesis; biotin biosynthesis. Its function is as follows. The physiological role of BioH is to remove the methyl group introduced by BioC when the pimeloyl moiety is complete. It allows to synthesize pimeloyl-ACP via the fatty acid synthetic pathway through the hydrolysis of the ester bonds of pimeloyl-ACP esters. This is Pimeloyl-[acyl-carrier protein] methyl ester esterase from Klebsiella pneumoniae (strain 342).